Consider the following 428-residue polypeptide: MRIYPLEKSLNLTIDDIAADKSISHRCAMFSLLSDKPSRVRNYLRAGDTLNTLKIVELLGAKIEDNGAEIIITPPQKIKEPNEILECGNSGTAMRLFMGLLAAQDGFFVLSGDKYLNSRPMARIAKPLNEMGAKIDGANNANNAPLCIRGTKFERFSFDSKIASAQVKSALLLAALYSNGCKFSEPELSRDHTERMLAGMGANIKRDELEITLEPMRSPLSPLDIDVPNDPSSAFFFAVAALIIPNSHIILKNILLNKTRIEAYRVLEKMGAEIKFHKTSSKYEDIGDIEVRYSPNLKGIEVSENISWLIDEAPALAIAFACAKGQSKLTNAKELRVKESDRIAVTINALKQCGVDASELEDGFIINGSEAKFATIDSHGDHRIAMSFAILGLKCGMQIEKSEFIATSFPNFAEILKKMGARVEDRAC.

Positions 21, 22, and 26 each coordinate 3-phosphoshikimate. Residue Lys-21 coordinates phosphoenolpyruvate. The phosphoenolpyruvate site is built by Gly-91 and Arg-119. 3-phosphoshikimate is bound by residues Ser-164, Gln-166, Asp-311, and Lys-338. Residue Gln-166 coordinates phosphoenolpyruvate. Asp-311 acts as the Proton acceptor in catalysis. Phosphoenolpyruvate contacts are provided by Arg-342 and Arg-383.

The protein belongs to the EPSP synthase family. As to quaternary structure, monomer.

Its subcellular location is the cytoplasm. It catalyses the reaction 3-phosphoshikimate + phosphoenolpyruvate = 5-O-(1-carboxyvinyl)-3-phosphoshikimate + phosphate. The protein operates within metabolic intermediate biosynthesis; chorismate biosynthesis; chorismate from D-erythrose 4-phosphate and phosphoenolpyruvate: step 6/7. Functionally, catalyzes the transfer of the enolpyruvyl moiety of phosphoenolpyruvate (PEP) to the 5-hydroxyl of shikimate-3-phosphate (S3P) to produce enolpyruvyl shikimate-3-phosphate and inorganic phosphate. In Campylobacter concisus (strain 13826), this protein is 3-phosphoshikimate 1-carboxyvinyltransferase.